The following is a 108-amino-acid chain: FK506-binding protein 1 (108 aa).

The PPIase FKBP-type domain occupies 20–108 (GDSVTIHYVG…KFEVELLKIN (89 aa)).

It belongs to the FKBP-type PPIase family. FKBP1 subfamily.

It is found in the cytoplasm. The enzyme catalyses [protein]-peptidylproline (omega=180) = [protein]-peptidylproline (omega=0). Its activity is regulated as follows. Inhibited by both FK506 and rapamycin. In terms of biological role, PPIases accelerate the folding of proteins. It catalyzes the cis-trans isomerization of proline imidic peptide bonds in oligopeptides. The protein is FK506-binding protein 1 (FPR1) of Cryptococcus neoformans var. neoformans serotype D (strain JEC21 / ATCC MYA-565) (Filobasidiella neoformans).